The chain runs to 397 residues: 1-deoxy-D-xylulose 5-phosphate reductoisomerase (397 aa).

8 residues coordinate NADPH: threonine 12, glycine 13, serine 14, isoleucine 15, glycine 38, lysine 39, asparagine 40, and asparagine 126. Residue lysine 127 participates in 1-deoxy-D-xylulose 5-phosphate binding. Glutamate 128 serves as a coordination point for NADPH. Position 152 (aspartate 152) interacts with Mn(2+). Residues serine 153, glutamate 154, serine 188, and histidine 211 each coordinate 1-deoxy-D-xylulose 5-phosphate. Glutamate 154 contributes to the Mn(2+) binding site. Residue glycine 217 coordinates NADPH. 1-deoxy-D-xylulose 5-phosphate-binding residues include serine 224, asparagine 229, lysine 230, and glutamate 233. A Mn(2+)-binding site is contributed by glutamate 233.

Belongs to the DXR family. It depends on Mg(2+) as a cofactor. Mn(2+) is required as a cofactor.

It catalyses the reaction 2-C-methyl-D-erythritol 4-phosphate + NADP(+) = 1-deoxy-D-xylulose 5-phosphate + NADPH + H(+). Its pathway is isoprenoid biosynthesis; isopentenyl diphosphate biosynthesis via DXP pathway; isopentenyl diphosphate from 1-deoxy-D-xylulose 5-phosphate: step 1/6. Catalyzes the NADPH-dependent rearrangement and reduction of 1-deoxy-D-xylulose-5-phosphate (DXP) to 2-C-methyl-D-erythritol 4-phosphate (MEP). The sequence is that of 1-deoxy-D-xylulose 5-phosphate reductoisomerase from Haemophilus influenzae (strain PittGG).